Reading from the N-terminus, the 377-residue chain is 3-dehydroquinate synthase (377 aa).

Residues Gly-115–Asp-119, Thr-139–Ser-140, Lys-152, and Lys-162 contribute to the NAD(+) site. 3 residues coordinate Zn(2+): Glu-195, His-257, and His-276.

It belongs to the sugar phosphate cyclases superfamily. Dehydroquinate synthase family. It depends on Co(2+) as a cofactor. Zn(2+) serves as cofactor. The cofactor is NAD(+).

It localises to the cytoplasm. The enzyme catalyses 7-phospho-2-dehydro-3-deoxy-D-arabino-heptonate = 3-dehydroquinate + phosphate. The protein operates within metabolic intermediate biosynthesis; chorismate biosynthesis; chorismate from D-erythrose 4-phosphate and phosphoenolpyruvate: step 2/7. Its function is as follows. Catalyzes the conversion of 3-deoxy-D-arabino-heptulosonate 7-phosphate (DAHP) to dehydroquinate (DHQ). The chain is 3-dehydroquinate synthase from Rhizobium etli (strain ATCC 51251 / DSM 11541 / JCM 21823 / NBRC 15573 / CFN 42).